A 559-amino-acid polypeptide reads, in one-letter code: CCR4-NOT transcription complex subunit 6-like (559 aa).

A required for interaction with cnot1, cnot3 and cnot7 region spans residues 1-148 (MPKEKYDPPD…LYQEPDGTRK (148 aa)). A nuclease domain region spans residues 1–550 (MPKEKYDPPD…NGLHLPVHST (550 aa)). 4 LRR repeats span residues 52 to 73 (HLTALHINNNNLSRIPPEIAKL), 75 to 96 (HLVYLNLSSNKLRSLPAELGNM), 98 to 120 (TLRELLLNNNCLRVLPYELGRLF), and 121 to 143 (QLQTLGLKGNPLSQDILNLYQEP). Glutamate 235 is a Mg(2+) binding site. Positions 235, 271, 353, and 358 each coordinate substrate. Residue aspartate 405 coordinates Mg(2+). Aspartate 405 (proton donor/acceptor) is an active-site residue. The substrate site is built by asparagine 407, asparagine 474, and phenylalanine 479.

It belongs to the CCR4/nocturin family. In terms of assembly, component of the CCR4-NOT complex. Requires Mg(2+) as cofactor.

Its subcellular location is the cytoplasm. It localises to the nucleus. The enzyme catalyses Exonucleolytic cleavage of poly(A) to 5'-AMP.. Functionally, poly(A) nuclease with 3'-5' RNase activity. Catalytic component of the CCR4-NOT complex which is one of the major cellular mRNA deadenylases and is linked to various cellular processes including bulk mRNA degradation, miRNA-mediated repression, translational repression during translational initiation and general transcription regulation. Additional complex functions may be a consequence of its influence on mRNA expression. This Danio rerio (Zebrafish) protein is CCR4-NOT transcription complex subunit 6-like (cnot6l).